Consider the following 204-residue polypeptide: Flavin-dependent thymidylate synthase (204 aa).

The region spanning 1–204 (MTVTLMQHTS…RYLFCLNQEG (204 aa)) is the ThyX domain. Residues serine 50 and 74–76 (RHR) each bind FAD. Residues 71–74 (ELAR), 84–86 (SSR), and lysine 143 each bind dUMP. The ThyX motif motif lies at 74–84 (RHRIASLSVKS). Residues 159–161 (NAR) and asparagine 165 each bind FAD. Arginine 170 contributes to the dUMP binding site. Arginine 170 serves as the catalytic Involved in ionization of N3 of dUMP, leading to its activation.

Belongs to the thymidylate synthase ThyX family. In terms of assembly, homotetramer. The cofactor is FAD.

The catalysed reaction is dUMP + (6R)-5,10-methylene-5,6,7,8-tetrahydrofolate + NADPH + H(+) = dTMP + (6S)-5,6,7,8-tetrahydrofolate + NADP(+). It participates in pyrimidine metabolism; dTTP biosynthesis. Its function is as follows. Catalyzes the reductive methylation of 2'-deoxyuridine-5'-monophosphate (dUMP) to 2'-deoxythymidine-5'-monophosphate (dTMP) while utilizing 5,10-methylenetetrahydrofolate (mTHF) as the methyl donor, and NADPH and FADH(2) as the reductant. This Wolinella succinogenes (strain ATCC 29543 / DSM 1740 / CCUG 13145 / JCM 31913 / LMG 7466 / NCTC 11488 / FDC 602W) (Vibrio succinogenes) protein is Flavin-dependent thymidylate synthase.